Reading from the N-terminus, the 330-residue chain is Methylthioribose-1-phosphate isomerase (330 aa).

Substrate is bound by residues 49 to 51 (RGA), R83, and Q179. Catalysis depends on D220, which acts as the Proton donor. 230–231 (NK) serves as a coordination point for substrate.

Belongs to the eIF-2B alpha/beta/delta subunits family. MtnA subfamily.

The enzyme catalyses 5-(methylsulfanyl)-alpha-D-ribose 1-phosphate = 5-(methylsulfanyl)-D-ribulose 1-phosphate. Its pathway is amino-acid biosynthesis; L-methionine biosynthesis via salvage pathway; L-methionine from S-methyl-5-thio-alpha-D-ribose 1-phosphate: step 1/6. Functionally, catalyzes the interconversion of methylthioribose-1-phosphate (MTR-1-P) into methylthioribulose-1-phosphate (MTRu-1-P). The polypeptide is Methylthioribose-1-phosphate isomerase (Thermus thermophilus (strain ATCC 27634 / DSM 579 / HB8)).